We begin with the raw amino-acid sequence, 317 residues long: MYKTIDLFSGIGGIRLGFEKYGCTNVFSSEWDKYARQVYEANFGEKPFGDINGIDPSDIPDHDILLAGFPCQPFSIAGKGLGFEDTRGTLFFNIAEILKTKQPKAFLLENVKRLTTHDSGRTFRIVLETLKQLGYTVYFKVLNTLDFGLPQKRERIYIVGFSDNIPFYFPEPINQYRPLGELLENDRDVEPSYFLSDTLKQKRLAALKKAPPTPSIWHENIGGNVSALPYSCALRAGGSYNYLVVNGVRRLTGREMLRLQGFPDDFEINIPYSQVRKVAGNSVSVPVIEATRKICSLLFPARSNKKGNWIYWRQDDA.

An SAM-dependent MTase C5-type domain is found at 2–302 (YKTIDLFSGI…KICSLLFPAR (301 aa)). Residue Cys-71 is part of the active site.

This sequence belongs to the class I-like SAM-binding methyltransferase superfamily. C5-methyltransferase family.

The enzyme catalyses a 2'-deoxycytidine in DNA + S-adenosyl-L-methionine = a 5-methyl-2'-deoxycytidine in DNA + S-adenosyl-L-homocysteine + H(+). Functionally, a methylase, recognizes the double-stranded sequence 5'-RGCGCY-3', methylates C-5 on both strands, and protects the DNA from cleavage by the NgoBI endonuclease. This chain is Type II methyltransferase M.NgoBI (ngoBIM), found in Neisseria gonorrhoeae.